We begin with the raw amino-acid sequence, 370 residues long: Peptide chain release factor 2 (370 aa).

An N5-methylglutamine modification is found at Gln252.

This sequence belongs to the prokaryotic/mitochondrial release factor family. In terms of processing, methylated by PrmC. Methylation increases the termination efficiency of RF2.

Its subcellular location is the cytoplasm. In terms of biological role, peptide chain release factor 2 directs the termination of translation in response to the peptide chain termination codons UGA and UAA. This Mycobacterium avium (strain 104) protein is Peptide chain release factor 2.